The primary structure comprises 875 residues: Alanine--tRNA ligase (875 aa).

The Zn(2+) site is built by His564, His568, Cys666, and His670.

This sequence belongs to the class-II aminoacyl-tRNA synthetase family. As to quaternary structure, homotetramer. The cofactor is Zn(2+).

It is found in the cytoplasm. The catalysed reaction is tRNA(Ala) + L-alanine + ATP = L-alanyl-tRNA(Ala) + AMP + diphosphate. Its function is as follows. Catalyzes the attachment of alanine to tRNA(Ala) in a two-step reaction: alanine is first activated by ATP to form Ala-AMP and then transferred to the acceptor end of tRNA(Ala). Also edits incorrectly charged Ser-tRNA(Ala) and Gly-tRNA(Ala) via its editing domain. The protein is Alanine--tRNA ligase of Serratia proteamaculans (strain 568).